We begin with the raw amino-acid sequence, 79 residues long: uncharacterized protein (79 aa).

The interval 1 to 27 (MRQRGQEHLPTSVKSEPRACNNPTVAE) is disordered.

This is an uncharacterized protein from Homo sapiens (Human).